We begin with the raw amino-acid sequence, 167 residues long: Photosystem I assembly protein Ycf3 (167 aa).

3 TPR repeats span residues 35-68, 72-105, and 120-153; these read AFAY…EVDA, SYIL…NPSL, and GEQA…APTN.

It belongs to the Ycf3 family.

The protein resides in the plastid. It is found in the chloroplast thylakoid membrane. Functionally, essential for the assembly of the photosystem I (PSI) complex. May act as a chaperone-like factor to guide the assembly of the PSI subunits. The protein is Photosystem I assembly protein Ycf3 of Stigeoclonium helveticum (Green alga).